The chain runs to 241 residues: MKILILACLVALALAREKEELNVSSETVESLSSNEPDSSSEESITHINKEKLQKFKHEGQQQREVERQDKISRFVQPQPVVYPYAEPVPYAVVPQSILPLAQPPILPFLQPEIMEVSQAKETILPKRKVMPFLKSPIVPFSERQILNPTNGENLRLPVHLIQPFMHQVPQSLLQTLMLPSQPVLSPPQSKVAPFPQPVVPYPQRDTPVQAFLLYQDPRLGPTGELDPATQPIVAVHNPVIV.

An N-terminal signal peptide occupies residues 1-15 (MKILILACLVALALA). Positions 21–45 (LNVSSETVESLSSNEPDSSSEESIT) are disordered. At S24 the chain carries Phosphoserine; in form 4-P, form 5-P, form 6-P and form 7-P. S25 carries the post-translational modification Phosphoserine; in form 7-P. The residue at position 27 (T27) is a Phosphothreonine; in form 6-P and form 7-P. Phosphoserine occurs at positions 30 and 32. Residue S33 is modified to Phosphoserine; in form 5-P, form 6-P and form 7-P. Residues S38, S39, and S40 each carry the phosphoserine; in form 4-P, form 5-P, form 6-P and form 7-P modification. Residue N150 is modified to Deamidated asparagine.

The protein belongs to the beta-casein family. There are at least five different forms found in milk, with varying degrees of phosphorylation. These include form 3-P which is phosphorylated at three sites that have not been determined, this form is present in very low amounts, form 4-P which is phosphorylated at four sites, form 5-P which is phosphorylated at five sites, form 6-P which is phosphorylated at six sites, and form 7-P which is phosphorylated at seven sites. Post-translationally, spontaneous deamidation of Asn-150 produces aspartate or isoaspartate. As to expression, mammary gland specific. Secreted in milk.

The protein resides in the secreted. In terms of biological role, important role in determination of the surface properties of the casein micelles. The chain is Beta-casein from Equus caballus (Horse).